The chain runs to 382 residues: Type 2 DNA topoisomerase 6 subunit A (382 aa).

The region spanning 14–155 (YDPQKVLKKL…MHITADRRGY (142 aa)) is the Topo IIA-type catalytic domain. Residue tyrosine 108 is the O-(5'-phospho-DNA)-tyrosine intermediate of the active site. Positions 202 and 254 each coordinate Mg(2+).

Belongs to the TOP6A family. As to quaternary structure, homodimer. Heterotetramer of two Top6A and two Top6B chains. The cofactor is Mg(2+).

The enzyme catalyses ATP-dependent breakage, passage and rejoining of double-stranded DNA.. Functionally, relaxes both positive and negative superturns and exhibits a strong decatenase activity. In Pyrococcus horikoshii (strain ATCC 700860 / DSM 12428 / JCM 9974 / NBRC 100139 / OT-3), this protein is Type 2 DNA topoisomerase 6 subunit A.